We begin with the raw amino-acid sequence, 327 residues long: Undecaprenyl-phosphate 4-deoxy-4-formamido-L-arabinose transferase (327 aa).

The Cytoplasmic portion of the chain corresponds to 1–235 (MFDAAPIKKV…TCLTTTPLRL (235 aa)). A helical transmembrane segment spans residues 236–256 (LSLLGSVIAIGGFSLSVLLIV). Over 257-269 (LRLALGPQWAAEG) the chain is Periplasmic. The chain crosses the membrane as a helical span at residues 270-290 (VFMLFAVLFTFIGAQFIGMGL). The Cytoplasmic portion of the chain corresponds to 291–327 (LGEYIGRIYNDVRARPRYFVQQVIYPESTPFTEESHQ).

The protein belongs to the glycosyltransferase 2 family.

The protein localises to the cell inner membrane. It catalyses the reaction UDP-4-deoxy-4-formamido-beta-L-arabinose + di-trans,octa-cis-undecaprenyl phosphate = 4-deoxy-4-formamido-alpha-L-arabinopyranosyl di-trans,octa-cis-undecaprenyl phosphate + UDP. It participates in glycolipid biosynthesis; 4-amino-4-deoxy-alpha-L-arabinose undecaprenyl phosphate biosynthesis; 4-amino-4-deoxy-alpha-L-arabinose undecaprenyl phosphate from UDP-4-deoxy-4-formamido-beta-L-arabinose and undecaprenyl phosphate: step 1/2. It functions in the pathway bacterial outer membrane biogenesis; lipopolysaccharide biosynthesis. Its function is as follows. Catalyzes the transfer of 4-deoxy-4-formamido-L-arabinose from UDP to undecaprenyl phosphate. The modified arabinose is attached to lipid A and is required for resistance to polymyxin and cationic antimicrobial peptides. The chain is Undecaprenyl-phosphate 4-deoxy-4-formamido-L-arabinose transferase from Salmonella agona (strain SL483).